The sequence spans 177 residues: Dual-action ribosomal maturation protein DarP (177 aa).

The protein belongs to the DarP family.

The protein resides in the cytoplasm. Member of a network of 50S ribosomal subunit biogenesis factors which assembles along the 30S-50S interface, preventing incorrect 23S rRNA structures from forming. Promotes peptidyl transferase center (PTC) maturation. This Histophilus somni (strain 129Pt) (Haemophilus somnus) protein is Dual-action ribosomal maturation protein DarP.